The sequence spans 440 residues: Transposon Ty1-BL Gag polyprotein (440 aa).

Composition is skewed to polar residues over residues 20-31 (SVTSKEVQTTQD), 46-55 (VSTQANSQQP), and 137-168 (VGTH…TNQH). Disordered stretches follow at residues 20-84 (SVTS…QNGP), 137-173 (VGTH…RPPP), and 350-424 (QQES…TTEP). The RNA-binding stretch occupies residues 299–401 (NNGIPINNKV…NSQSRTARAH (103 aa)). A compositionally biased stretch (basic and acidic residues) spans 363 to 372 (SPSDEKKDSR). Positions 373–411 (TYTNTTKPKSITRNSQKPNNSQSRTARAHNVSTFNNSPG) are enriched in polar residues.

Homotrimer.

The protein resides in the cytoplasm. Capsid protein (CA) is the structural component of the virus-like particle (VLP), forming the shell that encapsulates the retrotransposons dimeric RNA genome. The particles are assembled from trimer-clustered units and there are holes in the capsid shells that allow for the diffusion of macromolecules. CA also has nucleocapsid-like chaperone activity, promoting primer tRNA(i)-Met annealing to the multipartite primer-binding site (PBS), dimerization of Ty1 RNA and initiation of reverse transcription. The protein is Transposon Ty1-BL Gag polyprotein (TY1A-BL) of Saccharomyces cerevisiae (strain ATCC 204508 / S288c) (Baker's yeast).